A 213-amino-acid chain; its full sequence is Cytochrome b6 (213 aa).

A helical membrane pass occupies residues 30 to 50 (IFYCLGGLTLLAFLVQCVTGL). Residue Cys-33 coordinates heme c. His-84 and His-98 together coordinate heme b. The next 3 helical transmembrane spans lie at 88–108 (ANLM…TGSF), 114–134 (LNWL…FTGY), and 184–204 (LHVM…FIMI). Positions 185 and 200 each coordinate heme b.

This sequence belongs to the cytochrome b family. PetB subfamily. The subunits of the cytochrome bc complex are a Rieske Fe-S protein (PetC), cytochrome b6 (PetB), subunit IV (PetD), and a diheme cytochrome c (PetX). Heme b serves as cofactor. Heme c is required as a cofactor.

It is found in the cell membrane. Its function is as follows. Component of the cytochrome bc complex which donates electrons to the photosynthetic reaction center. This chain is Cytochrome b6, found in Heliobacterium mobile (Heliobacillus mobilis).